Reading from the N-terminus, the 452-residue chain is uncharacterized protein (452 aa).

A run of 7 helical transmembrane segments spans residues proline 18–lysine 38, leucine 81–alanine 101, isoleucine 269–isoleucine 289, alanine 317–isoleucine 337, valine 354–phenylalanine 374, valine 390–isoleucine 410, and serine 428–valine 448.

It belongs to the auxin efflux carrier (TC 2.A.69) family.

It localises to the membrane. This is an uncharacterized protein from Schizosaccharomyces pombe (strain 972 / ATCC 24843) (Fission yeast).